Reading from the N-terminus, the 399-residue chain is Phosphatidate cytidylyltransferase 5, chloroplastic (399 aa).

A chloroplast-targeting transit peptide spans 1 to 26; that stretch reads MAPFVEVCRYKPLPLSLSSLCTCPCR. A run of 6 helical transmembrane segments spans residues 123–143, 187–207, 217–237, 266–286, 309–329, and 333–353; these read VGGI…AAVL, FGHI…ALLL, LSST…WVKL, VGLV…TFAF, AFAG…SLSW, and LVST…GDLT.

It belongs to the CDS family. Requires Mg(2+) as cofactor.

The protein resides in the plastid. It localises to the chloroplast membrane. The enzyme catalyses a 1,2-diacyl-sn-glycero-3-phosphate + CTP + H(+) = a CDP-1,2-diacyl-sn-glycerol + diphosphate. The protein operates within phospholipid metabolism; CDP-diacylglycerol biosynthesis; CDP-diacylglycerol from sn-glycerol 3-phosphate: step 3/3. With respect to regulation, highest activities is obtained at about 30 mM CTP and 2 mM phosphatidic acid (PA). Functionally, may be involved in the synthesis of minor phospholipids and in modulation of IP3-mediated signal transduction. Promotes the biosynthesis of plastidial phosphatidylglycerol (PG) which is required for structure and function of thylakoid membranes and, hence, for photoautotrophic growth. This chain is Phosphatidate cytidylyltransferase 5, chloroplastic, found in Arabidopsis thaliana (Mouse-ear cress).